A 544-amino-acid polypeptide reads, in one-letter code: Spore germination protein KA (544 aa).

The segment at 1–36 (MPLFSKRKNNTDSKDKQNTDERNQEQQQEKERPVLI) is disordered. A compositionally biased stretch (basic and acidic residues) spans 9–33 (NNTDSKDKQNTDERNQEQQQEKERP). The next 5 helical transmembrane spans lie at 279-299 (FAIIVDGTPFVLIAPALFVQF), 321-341 (VLVFFISLVAPAVYVAATTFH), 392-412 (AVSIVGALVIGQAAVQAGIVS), 416-436 (VIIVALTAIASFATPAFAMAI), and 443-463 (FIFIIASAVMGFYGLILGIIM). Residues 504–523 (KRPESVSKEDKVRQGKDQRP) are compositionally biased toward basic and acidic residues. Positions 504 to 544 (KRPESVSKEDKVRQGKDQRPEPAASRGMVNKDLEEGDQNGT) are disordered.

It belongs to the GerABKA family.

The protein resides in the cell membrane. In terms of biological role, involved in the germination response to the combination of glucose, fructose, L-asparagine, and KCl. This Bacillus subtilis (strain 168) protein is Spore germination protein KA (gerKA).